The primary structure comprises 703 residues: ABC transporter G family member 11 (703 aa).

One can recognise an ABC transporter domain in the interval 50–293 (LTWQDLTVMV…FAQAGFPCPA (244 aa)). 87–94 (GPSGSGKS) lines the ATP pocket. Residues 382–594 (LQTYTLTKRS…ALQGQYQNDL (213 aa)) enclose the ABC transmembrane type-2 domain. N-linked (GlcNAc...) asparagine glycosylation occurs at N394. Transmembrane regions (helical) follow at residues 406–426 (LLIY…VGTS), 436–456 (CASF…PSFV), 485–505 (TPFL…MVGL), 513–533 (LFFV…MMAI), 540–560 (FLMG…VSGF), and 628–648 (INLS…FIMI). Residues N671 and N675 are each glycosylated (N-linked (GlcNAc...) asparagine). S688 carries the phosphoserine modification.

This sequence belongs to the ABC transporter superfamily. ABCG family. Eye pigment precursor importer (TC 3.A.1.204) subfamily. In terms of assembly, homodimer. Forms heterodimers with ABCG9, ABCG12 and ABCG14 in epidermal cells. Expressed in seedlings, roots, stems, leaves, flowers, and siliques, mostly in epidermis, trichomes, vasculatures and developing tissues. Follows an uniparental maternal expression in the seed, thus being the product of a maternally expressed imprinted gene. Accumulates in the phloem. Transcripts seem to be transported from shoots to roots.

The protein resides in the cell membrane. In terms of biological role, required for the cuticle, root suberin and pollen coat development by controlling cutin and maybe wax transport to the extracellular matrix. Involved in developmental plasticity and stress responses. Together with ABCG9 and ABCG14, required for vascular development by regulating lipid/sterol homeostasis. May be a transporter of lignin precursors during tracheary element differentiation. This chain is ABC transporter G family member 11, found in Arabidopsis thaliana (Mouse-ear cress).